The primary structure comprises 290 residues: uncharacterized protein (290 aa).

Helical transmembrane passes span 71–91, 124–144, 155–175, 202–222, 234–254, and 262–282; these read FWSFSVLTTMIISCIIFVKNI, GILISSPFIVYQILLFVLPGM, IIIGSMILFLLGLIFGYYILV, FILVLLFGTALAFQLPVLQLV, MFSIWRYVILLSTVVGAVLTP, and ILLSSIILILYFGGASLVLVV.

It belongs to the TatC family.

It is found in the plastid. Its subcellular location is the chloroplast membrane. This is an uncharacterized protein from Guillardia theta (Cryptophyte).